A 418-amino-acid chain; its full sequence is Glucose-1-phosphate adenylyltransferase (418 aa).

Residues Tyr104, Gly169, 184-185 (EK), and Ser202 each bind alpha-D-glucose 1-phosphate.

Belongs to the bacterial/plant glucose-1-phosphate adenylyltransferase family. Homotetramer.

The catalysed reaction is alpha-D-glucose 1-phosphate + ATP + H(+) = ADP-alpha-D-glucose + diphosphate. The protein operates within glycan biosynthesis; glycogen biosynthesis. Involved in the biosynthesis of ADP-glucose, a building block required for the elongation reactions to produce glycogen. Catalyzes the reaction between ATP and alpha-D-glucose 1-phosphate (G1P) to produce pyrophosphate and ADP-Glc. This is Glucose-1-phosphate adenylyltransferase from Jannaschia sp. (strain CCS1).